A 448-amino-acid polypeptide reads, in one-letter code: Tubulin beta chain (448 aa).

GTP is bound by residues glutamine 11, glutamate 69, serine 138, glycine 142, threonine 143, glycine 144, asparagine 204, and asparagine 226. Glutamate 69 contacts Mg(2+). Positions 425–448 are disordered; that stretch reads YQDAGVDEEEEEYDEEAPVEEPLE. The span at 429-448 shows a compositional bias: acidic residues; that stretch reads GVDEEEEEYDEEAPVEEPLE.

Belongs to the tubulin family. As to quaternary structure, dimer of alpha and beta chains. A typical microtubule is a hollow water-filled tube with an outer diameter of 25 nm and an inner diameter of 15 nM. Alpha-beta heterodimers associate head-to-tail to form protofilaments running lengthwise along the microtubule wall with the beta-tubulin subunit facing the microtubule plus end conferring a structural polarity. Microtubules usually have 13 protofilaments but different protofilament numbers can be found in some organisms and specialized cells. It depends on Mg(2+) as a cofactor.

The protein localises to the cytoplasm. The protein resides in the cytoskeleton. Tubulin is the major constituent of microtubules, a cylinder consisting of laterally associated linear protofilaments composed of alpha- and beta-tubulin heterodimers. Microtubules grow by the addition of GTP-tubulin dimers to the microtubule end, where a stabilizing cap forms. Below the cap, tubulin dimers are in GDP-bound state, owing to GTPase activity of alpha-tubulin. The protein is Tubulin beta chain of Metarhizium anisopliae (Entomophthora anisopliae).